A 66-amino-acid polypeptide reads, in one-letter code: Large ribosomal subunit protein bL33B (66 aa).

Belongs to the bacterial ribosomal protein bL33 family.

This is Large ribosomal subunit protein bL33B from Synechococcus sp. (strain CC9605).